The following is a 255-amino-acid chain: Hydroxyethylthiazole kinase (255 aa).

Position 38 (methionine 38) interacts with substrate. Arginine 114 and threonine 160 together coordinate ATP. Glycine 187 serves as a coordination point for substrate.

It belongs to the Thz kinase family. It depends on Mg(2+) as a cofactor.

The catalysed reaction is 5-(2-hydroxyethyl)-4-methylthiazole + ATP = 4-methyl-5-(2-phosphooxyethyl)-thiazole + ADP + H(+). The protein operates within cofactor biosynthesis; thiamine diphosphate biosynthesis; 4-methyl-5-(2-phosphoethyl)-thiazole from 5-(2-hydroxyethyl)-4-methylthiazole: step 1/1. Catalyzes the phosphorylation of the hydroxyl group of 4-methyl-5-beta-hydroxyethylthiazole (THZ). This chain is Hydroxyethylthiazole kinase, found in Lysinibacillus sphaericus (strain C3-41).